We begin with the raw amino-acid sequence, 198 residues long: ATP-dependent Clp protease proteolytic subunit (198 aa).

Serine 98 serves as the catalytic Nucleophile. Residue histidine 123 is part of the active site.

This sequence belongs to the peptidase S14 family. Fourteen ClpP subunits assemble into 2 heptameric rings which stack back to back to give a disk-like structure with a central cavity, resembling the structure of eukaryotic proteasomes.

The protein localises to the cytoplasm. The enzyme catalyses Hydrolysis of proteins to small peptides in the presence of ATP and magnesium. alpha-casein is the usual test substrate. In the absence of ATP, only oligopeptides shorter than five residues are hydrolyzed (such as succinyl-Leu-Tyr-|-NHMec, and Leu-Tyr-Leu-|-Tyr-Trp, in which cleavage of the -Tyr-|-Leu- and -Tyr-|-Trp bonds also occurs).. Functionally, cleaves peptides in various proteins in a process that requires ATP hydrolysis. Has a chymotrypsin-like activity. Plays a major role in the degradation of misfolded proteins. The chain is ATP-dependent Clp protease proteolytic subunit from Levilactobacillus brevis (strain ATCC 367 / BCRC 12310 / CIP 105137 / JCM 1170 / LMG 11437 / NCIMB 947 / NCTC 947) (Lactobacillus brevis).